The following is a 402-amino-acid chain: tRNA pseudouridine synthase Pus10 (402 aa).

The active-site Nucleophile is the aspartate 215. A disordered region spans residues 370–402 (ERGGHPGARGGTRRRPRKGPARPAGGRDRPRKT). A compositionally biased stretch (basic residues) spans 380–389 (GTRRRPRKGP).

Belongs to the pseudouridine synthase Pus10 family.

It carries out the reaction uridine(54) in tRNA = pseudouridine(54) in tRNA. The catalysed reaction is uridine(55) in tRNA = pseudouridine(55) in tRNA. Functionally, responsible for synthesis of pseudouridine from uracil-54 and uracil-55 in the psi GC loop of transfer RNAs. This Cenarchaeum symbiosum (strain A) protein is tRNA pseudouridine synthase Pus10.